A 156-amino-acid chain; its full sequence is MPKESGRKVVATNRKARHDYHVLDTYEAGIALMGTEVKSLREGHASMVDGFCTFYNDELWMEGIHIPEYNQGSWTNHSARRRRKLLLHREELTKISHKIRESGFTIVPLQLYFLDGKAKVEIGVARGKKEYDKRQTLREQQDKREALRVMRERNRG.

Residues 131–156 (YDKRQTLREQQDKREALRVMRERNRG) are disordered.

It belongs to the SmpB family.

The protein localises to the cytoplasm. In terms of biological role, required for rescue of stalled ribosomes mediated by trans-translation. Binds to transfer-messenger RNA (tmRNA), required for stable association of tmRNA with ribosomes. tmRNA and SmpB together mimic tRNA shape, replacing the anticodon stem-loop with SmpB. tmRNA is encoded by the ssrA gene; the 2 termini fold to resemble tRNA(Ala) and it encodes a 'tag peptide', a short internal open reading frame. During trans-translation Ala-aminoacylated tmRNA acts like a tRNA, entering the A-site of stalled ribosomes, displacing the stalled mRNA. The ribosome then switches to translate the ORF on the tmRNA; the nascent peptide is terminated with the 'tag peptide' encoded by the tmRNA and targeted for degradation. The ribosome is freed to recommence translation, which seems to be the essential function of trans-translation. The sequence is that of SsrA-binding protein from Arthrobacter sp. (strain FB24).